We begin with the raw amino-acid sequence, 262 residues long: Small ribosomal subunit protein eS1y (262 aa).

The span at 1–18 shows a compositional bias: basic residues; sequence MAVGKNKRISKGRKGGKK. Positions 1-21 are disordered; that stretch reads MAVGKNKRISKGRKGGKKKAV.

Belongs to the eukaryotic ribosomal protein eS1 family. As to quaternary structure, component of the small ribosomal subunit. Mature ribosomes consist of a small (40S) and a large (60S) subunit. The 40S subunit contains about 33 different proteins and 1 molecule of RNA (18S). The 60S subunit contains about 49 different proteins and 3 molecules of RNA (25S, 5.8S and 5S).

The protein localises to the cytoplasm. The polypeptide is Small ribosomal subunit protein eS1y (Arabidopsis thaliana (Mouse-ear cress)).